The following is a 596-amino-acid chain: PDZ and LIM domain protein 5 (596 aa).

At Ser2 the chain carries N-acetylserine. Ser2 carries the post-translational modification Phosphoserine. The PDZ domain maps to Ser2–Ser85. Lys89 carries the N6-acetyllysine; alternate modification. The residue at position 89 (Lys89) is an N6-succinyllysine; alternate. Lys89 is covalently cross-linked (Glycyl lysine isopeptide (Lys-Gly) (interchain with G-Cter in SUMO2); alternate). Residues Ser111, Ser134, and Ser137 each carry the phosphoserine modification. Disordered regions lie at residues Asn121 to Pro165, Ala196 to Arg240, and Thr255 to Val340. Positions Ser134–Ile143 are enriched in polar residues. The segment covering Pro144–Pro165 has biased composition (low complexity). 2 stretches are compositionally biased toward polar residues: residues Arg205 to Glu219 and Arg226 to Gly237. Phosphoserine is present on residues Ser228 and Ser260. Composition is skewed to basic and acidic residues over residues Asp258–Pro273 and Glu293–Lys304. Residues Lys305–Ser335 show a composition bias toward polar residues. Phosphoserine occurs at positions 309, 313, and 322. Residue Lys350 is modified to N6-acetyllysine. The segment at Ser354 to Thr381 is disordered. Phosphoserine occurs at positions 360 and 362. The span at Pro361 to Thr381 shows a compositional bias: polar residues. LIM zinc-binding domains lie at Pro418–Pro477, Pro477–Thr536, and Thr536–Phe596.

Interacts with various PKC isoforms through the LIM domains. Interacts with actin and alpha-actinin through the PDZ domain. Interacts (via LIM domains) with SIPA1L1/SPAR; this interaction may occur preferentially with isoform 1. As to expression, heart and skeletal muscle specific. Expression is commonly increased in the brain of patients with bipolar disorder, schizophrenia, and major depression.

The protein localises to the postsynaptic density. The protein resides in the presynapse. It localises to the postsynapse. It is found in the cytoplasm. Its subcellular location is the cytosol. Functionally, may play an important role in the heart development by scaffolding PKC to the Z-disk region. May play a role in the regulation of cardiomyocyte expansion. Isoforms lacking the LIM domains may negatively modulate the scaffolding activity of isoform 1. Overexpression promotes the development of heart hypertrophy. Contributes to the regulation of dendritic spine morphogenesis in neurons. May be required to restrain postsynaptic growth of excitatory synapses. Isoform 1, but not isoform 2, expression favors spine thinning and elongation. The chain is PDZ and LIM domain protein 5 from Homo sapiens (Human).